We begin with the raw amino-acid sequence, 126 residues long: Profilin (126 aa).

Belongs to the profilin family. As to quaternary structure, occurs in many kinds of cells as a complex with monomeric actin in a 1:1 ratio.

The protein resides in the cytoplasm. It localises to the cytoskeleton. Functionally, binds to actin and affects the structure of the cytoskeleton. At high concentrations, profilin prevents the polymerization of actin, whereas it enhances it at low concentrations. By binding to PIP2, it inhibits the formation of IP3 and DG. This Bombyx mori (Silk moth) protein is Profilin.